The primary structure comprises 712 residues: TIR domain-containing adapter molecule 1 (712 aa).

A TRIF-NTD region spans residues 1 to 153 (MACTGPSLPS…CGWDIAGDPG (153 aa)). The TRAF6-binding signature appears at 84 to 91 (EDPEEPPD). The short motif at 207 to 210 (LEIS) is the pLxIS motif element. At Ser-210 the chain carries Phosphoserine; by TBK1. Disordered regions lie at residues 216–316 (PFLS…SLPL) and 336–384 (LSVE…LFPS). A Glycyl lysine isopeptide (Lys-Gly) (interchain with G-Cter in ubiquitin) cross-link involves residue Lys-229. The short motif at 248-255 (QEPEEMSW) is the TRAF6-binding element. Pro residues predominate over residues 265–275 (PELPSSPPPGL). The TRAF6-binding motif lies at 299–309 (NYPVECTEGSA). The segment covering 347–369 (KPCPPTPTTPETSPPPPPPPPSS) has biased composition (pro residues). The TIR domain maps to 393–553 (KFYNFVILHA…QDTRALREQS (161 aa)). Positions 512 to 712 (RLDEHSQIFA…APEDKTQEAE (201 aa)) are sufficient to induce apoptosis. Pro residues-rich tracts occupy residues 620-633 (PFPTWPGCPQPPPL) and 640-649 (TPPPPSPQPA). The tract at residues 620 to 677 (PFPTWPGCPQPPPLHAWQAGTPPPPSPQPAAFPQSLPFPQSPAFPTASPAPPQSPGLQ) is disordered. A compositionally biased stretch (low complexity) spans 650–666 (AFPQSLPFPQSPAFPTA).

In terms of assembly, homodimer. Found in a multi-helicase-TICAM1 complex at least composed of DHX36, DDX1, DDX21 and TICAM1; this complex exists in resting cells with or without poly(I:C) RNA ligand stimulation. Interacts (via TIR domain) with DDX21 (via C-terminus). Interacts (via TIR domain) with DHX36 (via C-terminus). Interacts with AZI2 and IRF7. Interacts with TICAM2 in TLR4 recruitment. Interaction with PIAS4 inhibits the TICAM1-induced NF-kappa-B, IRF and IFNB1 activation. Interacts with IKBKB and IKBKE. Interaction with SARM1 blocks TICAM1-dependent transcription factor activation. Interacts with TRAF3. Interacts (when phosphorylated) with IRF3; following activation and phosphorylation on the pLxIS motif by TBK1, recruits IRF3. Interacts with TBK1, TRAF6 and RIPK1 and these interactions are enhanced in the presence of WDFY1. Interacts with TRAFD1. Interacts with UBQLN1 (via UBA domain). Interacts with TLR4. Interacts with WDFY1 in response to poly(I:C). Interacts (via the TIR domain) with TLR3 in response to poly(I:C) and this interaction is enhanced in the presence of WDFY1. Interacts with TRIM56. Component of a multi-helicase-TICAM1 complex that acts as a cytoplasmic sensor of viral double-stranded RNA (dsRNA) and plays a role in the activation of a cascade of antiviral responses including the induction of pro-inflammatory cytokines. Interacts (via the TIR domain) with TLR5. Interacts with TRIM8. Interacts with TAX1BP1 and TRIM32; these interactions target TICAM1 to TAX1BP1-mediated selective autophagic degradation. Interacts with DDX50. (Microbial infection) Interacts with hepatitis C virus (HCV) NS3/4A protease; this interaction leads to TICAM1 cleavage, thereby disrupting TLR3 signaling and preventing the establishment of an antiviral state. As to quaternary structure, (Microbial infection) Interacts with Seneca Valley virus protease 3C; this interaction allows the cleavage of TICAM1/TRIF and subsequent suppression of host innate immunity. In terms of assembly, (Microbial infection) Interacts (via C-terminus) with coxsackievirus B3 (CVB3) protease 3C. Post-translationally, phosphorylated by TBK1. Following activation, phosphorylated by TBK1 at Ser-210 in the pLxIS motif. The phosphorylated pLxIS motif constitutes an IRF3-binding motif, leading to recruitment of the transcription factor IRF3 to induce type-I interferons and other cytokines. Polyubiquitinated at Lys-229 by TRIM38 with 'Lys-48'-linked chains, leading to proteasomal degradation. Polyubiquitinated with 'Lys-6'- and 'Lys-33'-linked chains in a TRIM8-dependent manner; ubiquitination disrupts the interaction with TBK1 and subsequent interferon production. In terms of processing, (Microbial infection) Cleaved and degraded by hepatitis A virus (HAV) protein 3CD allowing the virus to disrupt host TLR3 signaling. Post-translationally, (Microbial infection) Cleaved by CVB3 protease 3C allowing the virus to disrupt host TLR3 signaling. (Microbial infection) Cleaved by Seneca Valley virus protease 3C allowing the virus to disrupt host TLR3 signaling. In terms of processing, (Microbial infection) Cleaved by protease 3C of human enterovirus D68 (EV68) allowing the virus to disrupt host TLR3 signaling. Post-translationally, (Microbial infection) Cleaved by HCV protease NS3/4A, thereby disrupting TLR3 signaling and preventing the establishment of an antiviral state. Ubiquitously expressed but with higher levels in liver.

It is found in the cytoplasmic vesicle. It localises to the autophagosome. The protein localises to the cytoplasm. The protein resides in the cytosol. Its subcellular location is the mitochondrion. Its function is as follows. Involved in innate immunity against invading pathogens. Adapter used by TLR3, TLR4 (through TICAM2) and TLR5 to mediate NF-kappa-B and interferon-regulatory factor (IRF) activation, and to induce apoptosis. Ligand binding to these receptors results in TRIF recruitment through its TIR domain. Distinct protein-interaction motifs allow recruitment of the effector proteins TBK1, TRAF6 and RIPK1, which in turn, lead to the activation of transcription factors IRF3 and IRF7, NF-kappa-B and FADD respectively. Phosphorylation by TBK1 on the pLxIS motif leads to recruitment and subsequent activation of the transcription factor IRF3 to induce expression of type I interferon and exert a potent immunity against invading pathogens. Component of a multi-helicase-TICAM1 complex that acts as a cytoplasmic sensor of viral double-stranded RNA (dsRNA) and plays a role in the activation of a cascade of antiviral responses including the induction of pro-inflammatory cytokines. The sequence is that of TIR domain-containing adapter molecule 1 (TICAM1) from Homo sapiens (Human).